Reading from the N-terminus, the 112-residue chain is 87 kDa annexin-binding protein (112 aa).

Binds annexin.

The chain is 87 kDa annexin-binding protein from Physarum polycephalum (Slime mold).